Reading from the N-terminus, the 296-residue chain is Ribosomal protein L11 methyltransferase (296 aa).

S-adenosyl-L-methionine-binding residues include T139, G163, D185, and N232.

Belongs to the methyltransferase superfamily. PrmA family.

The protein resides in the cytoplasm. The catalysed reaction is L-lysyl-[protein] + 3 S-adenosyl-L-methionine = N(6),N(6),N(6)-trimethyl-L-lysyl-[protein] + 3 S-adenosyl-L-homocysteine + 3 H(+). Its function is as follows. Methylates ribosomal protein L11. This is Ribosomal protein L11 methyltransferase from Rippkaea orientalis (strain PCC 8801 / RF-1) (Cyanothece sp. (strain PCC 8801)).